The primary structure comprises 212 residues: Cyclin-dependent kinase inhibitor 3 (212 aa).

Residues 1–12 (MKPPSSIQTSEF) are compositionally biased toward polar residues. Positions 1–23 (MKPPSSIQTSEFDSSDEEPIEDE) are disordered. The interval 1–34 (MKPPSSIQTSEFDSSDEEPIEDEQTPIQISWLPL) is interaction with CDK2. Residues 13–23 (DSSDEEPIEDE) show a composition bias toward acidic residues. Residues 32–201 (LPLSRVNYSQ…FRDKLAAHLS (170 aa)) form the Tyrosine-protein phosphatase domain. Cys-140 serves as the catalytic Phosphocysteine intermediate.

The protein belongs to the protein-tyrosine phosphatase family. Interacts with cyclin-dependent kinases such as CDK1, CDK2 and CDK3. Does not interact with CDK4. Interacts (via C-terminus) with phosphorylated CDK2 (via C-terminal helix). Interacts with MS4A3 (via C-terminus); the interaction enhances CDKN3 enzymatic activity.

Its subcellular location is the cytoplasm. The protein localises to the perinuclear region. The catalysed reaction is O-phospho-L-tyrosyl-[protein] + H2O = L-tyrosyl-[protein] + phosphate. It carries out the reaction O-phospho-L-seryl-[protein] + H2O = L-seryl-[protein] + phosphate. It catalyses the reaction O-phospho-L-threonyl-[protein] + H2O = L-threonyl-[protein] + phosphate. In terms of biological role, may play a role in cell cycle regulation. Dual specificity phosphatase active toward substrates containing either phosphotyrosine or phosphoserine residues. Dephosphorylates CDK2 at 'Thr-160' in a cyclin-dependent manner. This is Cyclin-dependent kinase inhibitor 3 from Sus scrofa (Pig).